We begin with the raw amino-acid sequence, 149 residues long: Alpha-amylase/trypsin inhibitor CMb (149 aa).

A signal peptide spans 1 to 24; it reads MASKSSCDLLLAAVLVSIFAAVAA. A glycan (N-linked (GlcNAc...) asparagine) is linked at Asn124.

The protein belongs to the protease inhibitor I6 (cereal trypsin/alpha-amylase inhibitor) family. As to quaternary structure, heterotetramer of one CMa, one CMb and two CMd chains. Five disulfide bonds, which are essential for the inhibitor activity, are probably present. Post-translationally, exists both in a glycosylated and in an unglycosylated form. The glycosylated form is a potent allergen. As to expression, endosperm.

The protein localises to the secreted. Part of a complex with inhibitory activity, but CMb is inactive as a separate subunit. The sequence is that of Alpha-amylase/trypsin inhibitor CMb (IAT2) from Hordeum vulgare (Barley).